Consider the following 427-residue polypeptide: Cyclic 2,3-diphosphoglycerate synthetase (427 aa).

The protein belongs to the cyclic 2,3-diphosphoglycerate synthetase family.

The protein resides in the cytoplasm. The enzyme catalyses (2R)-2,3-bisphosphoglycerate + ATP + H(+) = cyclic (2R)-2,3-bisphosphoglycerate + ADP + phosphate. In terms of biological role, catalyzes the formation of cyclic 2,3-diphosphoglycerate (cDPG) by formation of an intramolecular phosphoanhydride bond at the expense of ATP. In Pyrococcus abyssi (strain GE5 / Orsay), this protein is Cyclic 2,3-diphosphoglycerate synthetase.